Here is a 467-residue protein sequence, read N- to C-terminus: Probable Xaa-Pro aminopeptidase SMAC_04549 (467 aa).

The Mn(2+) site is built by Asp263, Asp274, Glu397, and Glu437.

The protein belongs to the peptidase M24B family. Mn(2+) is required as a cofactor.

The catalysed reaction is Release of any N-terminal amino acid, including proline, that is linked to proline, even from a dipeptide or tripeptide.. Functionally, catalyzes the removal of a penultimate prolyl residue from the N-termini of peptides. The polypeptide is Probable Xaa-Pro aminopeptidase SMAC_04549 (Sordaria macrospora (strain ATCC MYA-333 / DSM 997 / K(L3346) / K-hell)).